A 538-amino-acid polypeptide reads, in one-letter code: Spindle pole body protein CSA6 (538 aa).

2 disordered regions span residues 1–31 and 57–129; these read MEDS…TSDL and QNIS…KYQD. 2 stretches are compositionally biased toward basic and acidic residues: residues 18 to 30 and 57 to 68; these read PEIK…KTSD and QNISDSEHDLTP. Polar residues-rich tracts occupy residues 86 to 96 and 104 to 122; these read KFSSSIPQKPT and TSPT…SGPN. Positions 144–237 form a coiled coil; that stretch reads KQEQNLKLEN…RNERDELVKD (94 aa). A compositionally biased stretch (basic and acidic residues) spans 304 to 323; the sequence is KKISEPSAAVEKDTTSEDKT. Disordered regions lie at residues 304–338 and 355–458; these read KKIS…TPRM and SSNN…STKY. Composition is skewed to polar residues over residues 355-392 and 407-425; these read SSNN…SAAY and TNFY…QSSQ. Residues 426 to 444 show a composition bias toward basic and acidic residues; that stretch reads SDERPETFELPHVAKDHWL. The segment covering 446-457 has biased composition (polar residues); that stretch reads RPTSERSTQSTK.

Its subcellular location is the cytoplasm. It is found in the cytoskeleton. It localises to the microtubule organizing center. The protein resides in the spindle pole body. Its function is as follows. Plays a role in mitotic spindle pole body organization, possibly at the point of spindle pole body separation. Required for mitotic exit. This chain is Spindle pole body protein CSA6, found in Candida albicans (strain SC5314 / ATCC MYA-2876) (Yeast).